A 284-amino-acid chain; its full sequence is MGAEWLPVRKLGMVRGISPDSNLIRIDGISVRRGHRTVLHDVTASFPTAKVTAIVGPSGVGKTTMLGLLNGLIAPASGTVSFSEIGLLTEPTALRAARHQTATIFQDHALIGRLSAIDNVLLGLADTRHPLSPLPWPVAARQRAAKALDDVGLLDLATRRTAQLSGGERQRVGVARALIRRPKLLLGDEPFASVDPALAQQLGGLFRSLAMREGLTVILVLHQLQLARAIADRIIGLSDGRVAFDGPAAAFDADLEARIFPSLALSHDHSPPLSQPKETICSID.

The 241-residue stretch at 24–264 folds into the ABC transporter domain; that stretch reads IRIDGISVRR…LEARIFPSLA (241 aa). 56–63 is an ATP binding site; it reads GPSGVGKT.

It belongs to the ABC transporter superfamily. Phosphonates importer (TC 3.A.1.9.1) family. In terms of assembly, the complex is composed of two ATP-binding proteins (PhnC), two transmembrane proteins (PhnE) and a solute-binding protein (PhnD).

The protein resides in the cell inner membrane. The catalysed reaction is phosphonate(out) + ATP + H2O = phosphonate(in) + ADP + phosphate + H(+). Functionally, part of the ABC transporter complex PhnCDE involved in phosphonates import. Responsible for energy coupling to the transport system. This is Phosphonates import ATP-binding protein PhnC 2 from Rhodopseudomonas palustris (strain ATCC BAA-98 / CGA009).